Consider the following 468-residue polypeptide: Mitochondrial distribution and morphology protein 10 (468 aa).

A compositionally biased stretch (basic and acidic residues) spans 370 to 386 (ERDGLPGIQRDDHDMHH). Positions 370–394 (ERDGLPGIQRDDHDMHHHPQRPHAS) are disordered.

Belongs to the MDM10 family. Component of the ER-mitochondria encounter structure (ERMES) or MDM complex, composed of MMM1, MDM10, MDM12 and MDM34. Associates with the mitochondrial outer membrane sorting assembly machinery SAM(core) complex.

It is found in the mitochondrion outer membrane. Functionally, component of the ERMES/MDM complex, which serves as a molecular tether to connect the endoplasmic reticulum and mitochondria. Components of this complex are involved in the control of mitochondrial shape and protein biogenesis and may function in phospholipid exchange. MDM10 is involved in the late assembly steps of the general translocase of the mitochondrial outer membrane (TOM complex). Functions in the TOM40-specific route of the assembly of outer membrane beta-barrel proteins, including the association of TOM40 with the receptor TOM22 and small TOM proteins. Can associate with the SAM(core) complex as well as the MDM12-MMM1 complex, both involved in late steps of the major beta-barrel assembly pathway, that is responsible for biogenesis of all outer membrane beta-barrel proteins. May act as a switch that shuttles between both complexes and channels precursor proteins into the TOM40-specific pathway. Plays a role in mitochondrial morphology and in the inheritance of mitochondria. In Ajellomyces dermatitidis (strain ER-3 / ATCC MYA-2586) (Blastomyces dermatitidis), this protein is Mitochondrial distribution and morphology protein 10.